We begin with the raw amino-acid sequence, 377 residues long: Guanine nucleotide-binding protein subunit beta (377 aa).

7 WD repeats span residues 63–93 (GHTG…IVWN), 105–135 (LPCA…SIFN), 154–185 (GHKG…VLWD), 202–233 (GHTA…RLWD), 246–276 (GHES…RLFD), 293–323 (GDIP…YVWD), and 339–369 (SHEG…KIWA).

It belongs to the WD repeat G protein beta family. In terms of assembly, g proteins are composed of 3 units, alpha, beta and gamma.

Its function is as follows. Guanine nucleotide-binding proteins (G proteins) are involved as a modulator or transducer in various transmembrane signaling systems. The beta and gamma chains are required for the GTPase activity, for replacement of GDP by GTP, and for G protein-effector interaction. The protein is Guanine nucleotide-binding protein subunit beta (GB1) of Solanum tuberosum (Potato).